A 249-amino-acid polypeptide reads, in one-letter code: 1-(5-phosphoribosyl)-5-[(5-phosphoribosylamino)methylideneamino] imidazole-4-carboxamide isomerase (249 aa).

Residue Asp11 is the Proton acceptor of the active site. Asp133 serves as the catalytic Proton donor.

The protein belongs to the HisA/HisF family.

It localises to the cytoplasm. The enzyme catalyses 1-(5-phospho-beta-D-ribosyl)-5-[(5-phospho-beta-D-ribosylamino)methylideneamino]imidazole-4-carboxamide = 5-[(5-phospho-1-deoxy-D-ribulos-1-ylimino)methylamino]-1-(5-phospho-beta-D-ribosyl)imidazole-4-carboxamide. Its pathway is amino-acid biosynthesis; L-histidine biosynthesis; L-histidine from 5-phospho-alpha-D-ribose 1-diphosphate: step 4/9. The sequence is that of 1-(5-phosphoribosyl)-5-[(5-phosphoribosylamino)methylideneamino] imidazole-4-carboxamide isomerase from Mannheimia succiniciproducens (strain KCTC 0769BP / MBEL55E).